The primary structure comprises 554 residues: Propanediol dehydratase large subunit (554 aa).

Belongs to the diol/glycerol dehydratase large subunit family. The propanediol dehydratase enzyme is a heterotrimeric complex composed of a large (PduC), a medium (PduD) and a small (PduE) subunit. Adenosylcob(III)alamin serves as cofactor.

The protein resides in the bacterial microcompartment. It carries out the reaction propane-1,2-diol = propanal + H2O. It participates in polyol metabolism; 1,2-propanediol degradation. With respect to regulation, inhibited by glycerol. Part of the PduCDE complex that catalyzes the dehydration of 1,2-propanediol (1,2-PD) to propionaldehyde. Required for S.typhimurium growth on 1,2-PD as the sole carbon and energy source. This subunit is directly targeted to the BMC. Functionally, the 1,2-PD-specific bacterial microcompartment (BMC) concentrates low levels of 1,2-PD catabolic enzymes, concentrates volatile reaction intermediates thus enhancing pathway flux and keeps the level of toxic, mutagenic propionaldehyde low. The chain is Propanediol dehydratase large subunit from Salmonella typhimurium (strain LT2 / SGSC1412 / ATCC 700720).